The chain runs to 550 residues: Invertase (550 aa).

The first 22 residues, 1-22 (MIQLSPLLLLPLFSVFNSIADA), serve as a signal peptide directing secretion. Substrate contacts are provided by residues 39 to 42 (WMND), Gln-60, and 103 to 104 (FS). The active site involves Asp-42. Asn-112, Asn-113, Asn-119, and Asn-165 each carry an N-linked (GlcNAc...) asparagine glycan. Residue 170–171 (RD) participates in substrate binding. Asn-211 carries an N-linked (GlcNAc...) asparagine glycan. Substrate is bound at residue Glu-223. An N-linked (GlcNAc...) asparagine glycan is attached at Asn-237. Residue Trp-313 coordinates substrate. N-linked (GlcNAc...) asparagine glycosylation is found at Asn-333, Asn-364, Asn-398, and Asn-420.

The protein belongs to the glycosyl hydrolase 32 family.

The catalysed reaction is Hydrolysis of terminal non-reducing beta-D-fructofuranoside residues in beta-D-fructofuranosides.. This Wickerhamomyces anomalus (Yeast) protein is Invertase (INV1).